The sequence spans 239 residues: Small ribosomal subunit protein uS3 (239 aa).

The region spanning 39 to 107 is the KH type-2 domain; it reads VRQVLRKKMS…SVHINVIEVR (69 aa). Residues 217–239 are disordered; it reads KQDDISRGDRNADRSSRRSREVR.

The protein belongs to the universal ribosomal protein uS3 family. In terms of assembly, part of the 30S ribosomal subunit. Forms a tight complex with proteins S10 and S14.

In terms of biological role, binds the lower part of the 30S subunit head. Binds mRNA in the 70S ribosome, positioning it for translation. The polypeptide is Small ribosomal subunit protein uS3 (Xylella fastidiosa (strain 9a5c)).